The sequence spans 210 residues: MTNLEQQLSQKLEILLKQTALSITDQQKEQLIKLVLLLNKWNKAYNLTSVRDPMEMLVKHILDSVVVSPHLQGKHFIDVGTGPGLPGLPLAIVNPNKHFVLLDSLGKRISFIRNAIRELGLDNVEAVLSRVEEYHPEQPFDGVLSRAFASLKDMTDWCQHLPKQDGYFYALKGLYHQEEVEELSEKFTIQQVIRLQVPELIGERHLVIVK.

S-adenosyl-L-methionine-binding positions include Gly80, Leu85, 131 to 132 (VE), and Arg146.

The protein belongs to the methyltransferase superfamily. RNA methyltransferase RsmG family.

It is found in the cytoplasm. It carries out the reaction guanosine(527) in 16S rRNA + S-adenosyl-L-methionine = N(7)-methylguanosine(527) in 16S rRNA + S-adenosyl-L-homocysteine. Functionally, specifically methylates the N7 position of guanine in position 527 of 16S rRNA. This is Ribosomal RNA small subunit methyltransferase G from Pasteurella multocida (strain Pm70).